The sequence spans 205 residues: NAD(P)H dehydrogenase (quinone) (205 aa).

A Flavodoxin-like domain is found at V3–V194. Residues S9–I14 and T82–F84 contribute to the FMN site. Y11 is an NAD(+) binding site. W102 is a substrate binding site. H138 is a binding site for FMN.

This sequence belongs to the WrbA family. It depends on FMN as a cofactor.

It carries out the reaction a quinone + NADH + H(+) = a quinol + NAD(+). It catalyses the reaction a quinone + NADPH + H(+) = a quinol + NADP(+). In Geotalea daltonii (strain DSM 22248 / JCM 15807 / FRC-32) (Geobacter daltonii), this protein is NAD(P)H dehydrogenase (quinone).